The sequence spans 687 residues: Protein white (687 aa).

The interval 1-30 (MGQEDQELLIRGGSKHPSAEHLNNGDSGAA) is disordered. Residues 1 to 419 (MGQEDQELLI…FMQFRAVLWR (419 aa)) lie on the Cytoplasmic side of the membrane. In terms of domain architecture, ABC transporter spans 93–341 (NRTRGLFCNE…FSYVGAQCPT (249 aa)). 130-137 (GSSGAGKT) lines the ATP pocket. Residues 420–440 (SWLSVLKEPLLVKVRLIQTTM) form a helical membrane-spanning segment. Residues 441–460 (VAILIGLIFLGQQLTQVGVM) lie on the Extracellular side of the membrane. A helical transmembrane segment spans residues 461-481 (NINGAIFLFLTNMTFQNVFAT). The Cytoplasmic segment spans residues 482 to 497 (INVFTSELPVFMREAR). A helical transmembrane segment spans residues 498 to 518 (SRLYRCDTYFLGKTIAELPLF). Topologically, residues 519–531 (LTVPLVFTAIAYP) are extracellular. Residues 532-552 (MIGLRAGVLHFFNCLALVTLV) form a helical membrane-spanning segment. The Cytoplasmic portion of the chain corresponds to 553–568 (ANVSTSFGYLISCASS). A helical transmembrane segment spans residues 569–589 (STSMALSVGPPVIIPFLLFGG). The Extracellular segment spans residues 590–644 (FFLNSGSVPVYLKWLSYLSWFRYANEGLLINQWADVEPGEISCTSSNTTCPSSGK). An N-linked (GlcNAc...) asparagine glycan is attached at asparagine 636. Residues 645–665 (VILETLNFSAADLPLDYVGLA) form a helical membrane-spanning segment. Over 666–675 (ILIVSFRVLA) the chain is Cytoplasmic.

It belongs to the ABC transporter superfamily. ABCG family. Eye pigment precursor importer (TC 3.A.1.204) subfamily. In terms of assembly, may form a heterodimer with bw/brown. May form a heterodimer with st/scarlet. In terms of tissue distribution, expressed in the head (at protein level). Expressed in the eye, specifically in retina primary pigment cells, in the basement membrane of the base of secondary and tertiary pigment cells, and in retinula cells (at protein level). Expressed in the retina underlying lamina in the epithelial glia that surrounds the array of lamina cartridges (at protein level). Weakly expressed in photoreceptors, specifically in terminals of R1-R6, R7 and R8 (at protein level). Expressed at very low levels in medulla and central brain (at protein level). Expressed in principal cells of the Malpighian tubules.

The protein resides in the cytoplasmic vesicle membrane. The enzyme catalyses 3',5'-cyclic GMP(in) + ATP + H2O = 3',5'-cyclic GMP(out) + ADP + phosphate + H(+). It carries out the reaction guanine(out) + ATP + H2O = guanine(in) + ADP + phosphate + H(+). It catalyses the reaction riboflavin(in) + ATP + H2O = riboflavin(out) + ADP + phosphate + H(+). The catalysed reaction is (6S)-5,6,7,8-tetrahydrofolate(out) + ATP + H2O = (6S)-5,6,7,8-tetrahydrofolate(in) + ADP + phosphate + H(+). The enzyme catalyses L-tryptophan(out) + ATP + H2O = L-tryptophan(in) + ADP + phosphate + H(+). It carries out the reaction L-kynurenine(out) + ATP + H2O = L-kynurenine(in) + ADP + phosphate + H(+). It catalyses the reaction xanthine(out) + ATP + H2O = xanthine(in) + ADP + phosphate + H(+). ATP-dependent transporter of the ATP-binding cassette (ABC) family which transports various molecules including bioamines, neurotransmitters, metabolic intermediates and second messengers. In the eye, required for the transport of the eye red and brown pigment precursors, guanine and tryptophan, into pigment cell granules. Probably in association with bw/brown, involved in the transport of guanine. Probably in association with st/scarlet involved in the transport of kynurenine and probably tryptophan. Involved in the transport of kynurenine in pupal eyes. May play a role in histamine uptake by the lamina epithelial glia which surrounds photoreceptors R1-R6. In Malpighian tubules, involved in the transport of cGMP, guanine, xanthine, riboflavin, kynurenine and tryptophan. Probably in association with br/brown, involved in aging-induced intestinal stem cell proliferation in the midgut by regulating tetrahydrofolate transport. Probably in association with st/scarlet, plays a role in zinc storage granule biogenesis in Malpighian tubule principal epithelial cells. This Drosophila melanogaster (Fruit fly) protein is Protein white.